The sequence spans 381 residues: Tetraacyldisaccharide 4'-kinase (381 aa).

78 to 85 (AVGGTGKT) is an ATP binding site.

The protein belongs to the LpxK family.

The enzyme catalyses a lipid A disaccharide + ATP = a lipid IVA + ADP + H(+). It participates in glycolipid biosynthesis; lipid IV(A) biosynthesis; lipid IV(A) from (3R)-3-hydroxytetradecanoyl-[acyl-carrier-protein] and UDP-N-acetyl-alpha-D-glucosamine: step 6/6. Functionally, transfers the gamma-phosphate of ATP to the 4'-position of a tetraacyldisaccharide 1-phosphate intermediate (termed DS-1-P) to form tetraacyldisaccharide 1,4'-bis-phosphate (lipid IVA). The sequence is that of Tetraacyldisaccharide 4'-kinase from Syntrophobacter fumaroxidans (strain DSM 10017 / MPOB).